The following is a 252-amino-acid chain: MLAKRIIPCLDVKDGKTVKGINFINFRDAGDAVELGRQYSKQGADELVYLDIIASHEERKTFIELVKKVAANINIPFTVGGGINEMQDVDRLLNAGADKISVNSAALRNPSLIEDIAKNFGSQVCVVAIDAKLEADGQWLCYLNGGRIPTNQYLFKWANEVESRGAGEILFTSITHDGVKNGYANEVLSALTGSLHIPIIASGGAGKQEHFRDAFIIGKADAALAASVFHFGEMNIKVLKNYLWRKGISIRN.

Active-site residues include aspartate 11 and aspartate 130.

This sequence belongs to the HisA/HisF family. As to quaternary structure, heterodimer of HisH and HisF.

It is found in the cytoplasm. It carries out the reaction 5-[(5-phospho-1-deoxy-D-ribulos-1-ylimino)methylamino]-1-(5-phospho-beta-D-ribosyl)imidazole-4-carboxamide + L-glutamine = D-erythro-1-(imidazol-4-yl)glycerol 3-phosphate + 5-amino-1-(5-phospho-beta-D-ribosyl)imidazole-4-carboxamide + L-glutamate + H(+). Its pathway is amino-acid biosynthesis; L-histidine biosynthesis; L-histidine from 5-phospho-alpha-D-ribose 1-diphosphate: step 5/9. Its function is as follows. IGPS catalyzes the conversion of PRFAR and glutamine to IGP, AICAR and glutamate. The HisF subunit catalyzes the cyclization activity that produces IGP and AICAR from PRFAR using the ammonia provided by the HisH subunit. This chain is Imidazole glycerol phosphate synthase subunit HisF, found in Azobacteroides pseudotrichonymphae genomovar. CFP2.